Consider the following 249-residue polypeptide: Cysteine desulfuration protein SufE (249 aa).

C154 functions as the Cysteine persulfide intermediate in the catalytic mechanism.

It belongs to the SufE family. In terms of assembly, monomer. Interacts with SufS; interaction enhances cysteine desulfurase activity of SufS. In terms of processing, proteolytically cleaved.

The protein resides in the plastid. The protein localises to the apicoplast. It functions in the pathway cofactor biosynthesis; iron-sulfur cluster biosynthesis. Participates in sulfur mobilization (SUF) pathway for iron-sulfur (Fe-S) cluster biogenesis. Enhances cysteine desulfurase activity of SufS. Probably functions as a sulfur acceptor for SufS. The polypeptide is Cysteine desulfuration protein SufE (Plasmodium falciparum (isolate 3D7)).